Consider the following 195-residue polypeptide: MRLAEVVRNTSETQIRVKINLDGTGQQKLATGVPFLDHMLDQIARHGLFDLEIEAHGDLHIDDHHTVEDTGITLGQAVAKAIGDKKGIRRYGHSYVPLDEALSRVVIDFSGRPGLEFHVPFTRARIGTFDVDLSIEFFRGFVNHAGVTLHIDNLRGLNAHHQMETVFKAFGRALRMATELDERAAGQIPSTKGSL.

Belongs to the imidazoleglycerol-phosphate dehydratase family.

It localises to the cytoplasm. It catalyses the reaction D-erythro-1-(imidazol-4-yl)glycerol 3-phosphate = 3-(imidazol-4-yl)-2-oxopropyl phosphate + H2O. It participates in amino-acid biosynthesis; L-histidine biosynthesis; L-histidine from 5-phospho-alpha-D-ribose 1-diphosphate: step 6/9. The protein is Imidazoleglycerol-phosphate dehydratase of Paraburkholderia xenovorans (strain LB400).